A 788-amino-acid chain; its full sequence is Cadherin-related family member 4 (788 aa).

A signal peptide spans 1 to 16 (MVLLRLLVFLFAPVVS). The Extracellular portion of the chain corresponds to 17-686 (DLCSLPCFIN…DTEAFWQPQP (670 aa)). 4 consecutive Cadherin domains span residues 237–338 (LEQA…PPRC), 339–449 (LPAL…APRT), 444–554 (ACAP…EPPF), and 551–674 (EPPF…TPML). A glycan (N-linked (GlcNAc...) asparagine) is linked at Asn-242. The chain crosses the membrane as a helical span at residues 687-707 (WFVVVLTATGALLLLALGWLL). The Cytoplasmic portion of the chain corresponds to 708-788 (GRLLQGLAQL…NTHTGARRWL (81 aa)).

It is found in the membrane. In terms of biological role, cadherins are calcium-dependent cell adhesion proteins. They preferentially interact with themselves in a homophilic manner in connecting cells; cadherins may thus contribute to the sorting of heterogeneous cell types. The sequence is that of Cadherin-related family member 4 (CDHR4) from Homo sapiens (Human).